Here is a 181-residue protein sequence, read N- to C-terminus: Oligoribonuclease (181 aa).

The region spanning 8–171 is the Exonuclease domain; it reads LIWVDLEMTG…DDIRESIAEL (164 aa). The active site involves tyrosine 129.

The protein belongs to the oligoribonuclease family.

Its subcellular location is the cytoplasm. In terms of biological role, 3'-to-5' exoribonuclease specific for small oligoribonucleotides. In Vibrio parahaemolyticus serotype O3:K6 (strain RIMD 2210633), this protein is Oligoribonuclease.